A 186-amino-acid chain; its full sequence is MSEGVDLKELKRRMDGAISAFKHDIASLRTGRASANVLDPVTVEAYGSRMPLNQVANITVPEARMLSVSVWDKSMVGAVERAIRESNLGLNPIVDGQNLRIPLPELNEERRKSLVKVAHDYAEKSKVAVRHVRRDGMDDLKKAEKDGEIGQDESRAQSERVQKMTDDVISEIDRLLADKEKEIMQV.

The segment at 135 to 164 (DGMDDLKKAEKDGEIGQDESRAQSERVQKM) is disordered.

Belongs to the RRF family.

It is found in the cytoplasm. Functionally, responsible for the release of ribosomes from messenger RNA at the termination of protein biosynthesis. May increase the efficiency of translation by recycling ribosomes from one round of translation to another. In Sinorhizobium medicae (strain WSM419) (Ensifer medicae), this protein is Ribosome-recycling factor.